A 60-amino-acid polypeptide reads, in one-letter code: Large ribosomal subunit protein bL32 (60 aa).

Residues 1-23 (MAKHPVPKKKTSKARRDARRSHH) are compositionally biased toward basic residues. The tract at residues 1-30 (MAKHPVPKKKTSKARRDARRSHHALTPPTL) is disordered.

In terms of assembly, part of the 50S ribosomal subunit.

Its function is as follows. Found on the solvent side of the large subunit. The polypeptide is Large ribosomal subunit protein bL32 (rpmF) (Thermus thermophilus (strain ATCC 27634 / DSM 579 / HB8)).